A 142-amino-acid polypeptide reads, in one-letter code: Large ribosomal subunit protein bL21 (142 aa).

Residues 74-84 (RRRQNSKRTRG) are compositionally biased toward basic residues. Residues 74-142 (RRRQNSKRTR…KAATKAESAE (69 aa)) form a disordered region. Over residues 107–125 (KAAEKKAPKADAAEGEAAK) the composition is skewed to basic and acidic residues. Over residues 126–135 (PKKAAPKKAA) the composition is skewed to basic residues.

It belongs to the bacterial ribosomal protein bL21 family. In terms of assembly, part of the 50S ribosomal subunit. Contacts protein L20.

In terms of biological role, this protein binds to 23S rRNA in the presence of protein L20. The sequence is that of Large ribosomal subunit protein bL21 from Brucella abortus (strain S19).